Reading from the N-terminus, the 339-residue chain is Biotin synthase (339 aa).

The Radical SAM core domain occupies 51–278 (TEVELATLLS…KARVRLSAGR (228 aa)). [4Fe-4S] cluster-binding residues include Cys66, Cys70, and Cys73. Residues Cys110, Cys141, Cys201, and Arg273 each coordinate [2Fe-2S] cluster.

This sequence belongs to the radical SAM superfamily. Biotin synthase family. Homodimer. It depends on [4Fe-4S] cluster as a cofactor. [2Fe-2S] cluster serves as cofactor.

The catalysed reaction is (4R,5S)-dethiobiotin + (sulfur carrier)-SH + 2 reduced [2Fe-2S]-[ferredoxin] + 2 S-adenosyl-L-methionine = (sulfur carrier)-H + biotin + 2 5'-deoxyadenosine + 2 L-methionine + 2 oxidized [2Fe-2S]-[ferredoxin]. It participates in cofactor biosynthesis; biotin biosynthesis; biotin from 7,8-diaminononanoate: step 2/2. Catalyzes the conversion of dethiobiotin (DTB) to biotin by the insertion of a sulfur atom into dethiobiotin via a radical-based mechanism. The sequence is that of Biotin synthase from Janthinobacterium sp. (strain Marseille) (Minibacterium massiliensis).